The following is a 275-amino-acid chain: Hydroxyethylthiazole kinase (275 aa).

M57 contributes to the substrate binding site. R132 and S178 together coordinate ATP. Substrate is bound at residue G205.

The protein belongs to the Thz kinase family. Requires Mg(2+) as cofactor.

The enzyme catalyses 5-(2-hydroxyethyl)-4-methylthiazole + ATP = 4-methyl-5-(2-phosphooxyethyl)-thiazole + ADP + H(+). It functions in the pathway cofactor biosynthesis; thiamine diphosphate biosynthesis; 4-methyl-5-(2-phosphoethyl)-thiazole from 5-(2-hydroxyethyl)-4-methylthiazole: step 1/1. Its function is as follows. Catalyzes the phosphorylation of the hydroxyl group of 4-methyl-5-beta-hydroxyethylthiazole (THZ). This Clavibacter sepedonicus (Clavibacter michiganensis subsp. sepedonicus) protein is Hydroxyethylthiazole kinase.